Here is a 305-residue protein sequence, read N- to C-terminus: Serine/threonine-protein phosphatase PP1-delta (305 aa).

Mn(2+) is bound by residues aspartate 62, histidine 64, aspartate 90, and asparagine 122. The Proton donor role is filled by histidine 123. Residues histidine 172 and histidine 247 each contribute to the Mn(2+) site.

Belongs to the PPP phosphatase family. Expressed in male germline including spermatocytes, spermatids and spermatozoa.

The protein resides in the chromosome. It is found in the cell projection. Its subcellular location is the pseudopodium. The protein localises to the cytoplasm. The enzyme catalyses O-phospho-L-seryl-[protein] + H2O = L-seryl-[protein] + phosphate. It carries out the reaction O-phospho-L-threonyl-[protein] + H2O = L-threonyl-[protein] + phosphate. Probable phosphatase which plays a redundant role with gsp-4 in spermatogenesis by regulating sister chromatid segregation during meiosis. In addition, involved in sperm motility by controlling the dynamic disassembly of major sperm proteins (MSP) in the spermatozoan pseudopodium. This is Serine/threonine-protein phosphatase PP1-delta from Caenorhabditis elegans.